The sequence spans 269 residues: Energy-coupling factor transporter ATP-binding protein EcfA1 (269 aa).

An ABC transporter domain is found at isoleucine 8 to aspartate 242. Glycine 42–serine 49 is an ATP binding site.

The protein belongs to the ABC transporter superfamily. Energy-coupling factor EcfA family. As to quaternary structure, forms a stable energy-coupling factor (ECF) transporter complex composed of 2 membrane-embedded substrate-binding proteins (S component), 2 ATP-binding proteins (A component) and 2 transmembrane proteins (T component).

Its subcellular location is the cell membrane. Functionally, ATP-binding (A) component of a common energy-coupling factor (ECF) ABC-transporter complex. Unlike classic ABC transporters this ECF transporter provides the energy necessary to transport a number of different substrates. The polypeptide is Energy-coupling factor transporter ATP-binding protein EcfA1 (Staphylococcus aureus (strain MRSA252)).